Consider the following 247-residue polypeptide: ATP synthase subunit a, chloroplastic (247 aa).

A run of 5 helical transmembrane segments spans residues 38-58, 95-115, 134-154, 199-219, and 220-240; these read QVLI…TLAV, VPFI…GALL, INTT…AGLT, LVVV…VMFL, and GLFT…AYIG.

Belongs to the ATPase A chain family. In terms of assembly, F-type ATPases have 2 components, CF(1) - the catalytic core - and CF(0) - the membrane proton channel. CF(1) has five subunits: alpha(3), beta(3), gamma(1), delta(1), epsilon(1). CF(0) has four main subunits: a, b, b' and c.

It is found in the plastid. The protein resides in the chloroplast thylakoid membrane. Functionally, key component of the proton channel; it plays a direct role in the translocation of protons across the membrane. This Vitis vinifera (Grape) protein is ATP synthase subunit a, chloroplastic.